A 224-amino-acid chain; its full sequence is Synaptogyrin-2 (224 aa).

Methionine 1 is modified (N-acetylmethionine). Serine 3 bears the Phosphoserine mark. An MARVEL domain is found at 20–171; the sequence is FLTQPQVVAR…LASLAYQRYK (152 aa). 4 helical membrane passes run 26 to 46, 73 to 93, 105 to 125, and 147 to 167; these read VVAR…IYGE, AIGV…AYFP, VIGD…GFCF, and AAIT…SLAY.

It belongs to the synaptogyrin family. In terms of assembly, (Microbial infection) Interacts with SFTS phlebovirus protein NSs; may be involved in virus replication. Post-translationally, may be tyrosine phosphorylated by Src. As to expression, ubiquitous; low expression in brain.

Its subcellular location is the cytoplasmic vesicle membrane. It localises to the cytoplasmic vesicle. The protein localises to the secretory vesicle. The protein resides in the synaptic vesicle membrane. It is found in the lipid droplet. Functionally, may play a role in regulated exocytosis. In neuronal cells, modulates the localization of synaptophysin/SYP into synaptic-like microvesicles and may therefore play a role in the formation and/or the maturation of this vesicles. May also play a role in GLUT4 storage and transport to the plasma membrane. (Microbial infection) May play a role in the assembly of cytoplasmic inclusion bodies required for SFTS phlebovirus replication. This is Synaptogyrin-2 from Homo sapiens (Human).